Consider the following 666-residue polypeptide: Probable potassium transport system protein Kup (666 aa).

12 helical membrane-spanning segments follow: residues 16 to 36 (GFIIALGIVYGDIGTSPLYTM), 58 to 78 (ISLIIWTLTLITTIKYVLVAL), 99 to 119 (TPWLIVPAVIGGATLLSDGAL), 141 to 161 (IFQNQSNVIFATLFILLLLFA), 167 to 187 (TGVIGKLFGPIMFIWFAFLGI), 221 to 241 (IFILGSIFLATTGAEALYSDL), 253 to 273 (WPFVKVAIILSYCGQGAWILA), 292 to 312 (FTMHVVILATLAAIIASQALI), 343 to 363 (TYIPVINWFLFAITTSIVLLF), 373 to 393 (YGLAITITMLMTTILLSFFLI), 402 to 422 (VLLMMIFFGILEGIFFLASAV), and 424 to 444 (FMHGGYVVVIIAVAIIFIMTI).

Belongs to the HAK/KUP transporter (TC 2.A.72) family.

Its subcellular location is the cell membrane. The catalysed reaction is K(+)(in) + H(+)(in) = K(+)(out) + H(+)(out). Functionally, transport of potassium into the cell. Likely operates as a K(+):H(+) symporter. This Streptococcus agalactiae serotype V (strain ATCC BAA-611 / 2603 V/R) protein is Probable potassium transport system protein Kup.